Here is a 546-residue protein sequence, read N- to C-terminus: Probable lysosomal cobalamin transporter (546 aa).

The next 4 helical transmembrane spans lie at 8–28 (LAQG…FSWF), 48–68 (IIAL…IFLV), 102–122 (ILYA…YFFF), and 141–161 (YSIG…FAPL). The N-linked (GlcNAc...) asparagine glycan is linked to N167. 4 helical membrane-spanning segments follow: residues 189 to 209 (TALS…MITY), 304 to 324 (MVFG…LFIT), 352 to 372 (IIMV…LLVV), and 407 to 427 (ALLF…VMLF). N444, N452, and N459 each carry an N-linked (GlcNAc...) asparagine glycan. A helical transmembrane segment spans residues 495–515 (VWFFGACYYWGTWLFLVVFMT).

It belongs to the LIMR family. LMBRD1 subfamily.

It is found in the lysosome membrane. Its function is as follows. Probable lysosomal cobalamin transporter. Required to export cobalamin from lysosomes allowing its conversion to cofactors. The protein is Probable lysosomal cobalamin transporter of Nematostella vectensis (Starlet sea anemone).